We begin with the raw amino-acid sequence, 383 residues long: 1-deoxy-D-xylulose 5-phosphate reductoisomerase (383 aa).

Residues Thr-10, Gly-11, Ser-12, Ile-13, Gly-36, Arg-37, Asn-38, and Asn-122 each coordinate NADPH. Lys-123 is a binding site for 1-deoxy-D-xylulose 5-phosphate. Glu-124 provides a ligand contact to NADPH. Asp-148 contributes to the Mn(2+) binding site. Residues Ser-149, Glu-150, Ser-174, and His-197 each coordinate 1-deoxy-D-xylulose 5-phosphate. Residue Glu-150 participates in Mn(2+) binding. Gly-203 contacts NADPH. Residues Ser-210, Asn-215, Lys-216, and Glu-219 each contribute to the 1-deoxy-D-xylulose 5-phosphate site. Residue Glu-219 coordinates Mn(2+).

It belongs to the DXR family. Mg(2+) is required as a cofactor. The cofactor is Mn(2+).

The enzyme catalyses 2-C-methyl-D-erythritol 4-phosphate + NADP(+) = 1-deoxy-D-xylulose 5-phosphate + NADPH + H(+). Its pathway is isoprenoid biosynthesis; isopentenyl diphosphate biosynthesis via DXP pathway; isopentenyl diphosphate from 1-deoxy-D-xylulose 5-phosphate: step 1/6. Catalyzes the NADPH-dependent rearrangement and reduction of 1-deoxy-D-xylulose-5-phosphate (DXP) to 2-C-methyl-D-erythritol 4-phosphate (MEP). The polypeptide is 1-deoxy-D-xylulose 5-phosphate reductoisomerase (Bacillus subtilis (strain 168)).